The following is a 1021-amino-acid chain: Sodium/potassium-transporting ATPase subunit alpha-1 (1021 aa).

The propeptide occupies 1 to 5 (MGKGG). Over residues 1-11 (MGKGGGRDKYE) the composition is skewed to basic and acidic residues. A disordered region spans residues 1-37 (MGKGGGRDKYEPAAISEHGNKKKAKKERDMDELKKEV). The Cytoplasmic portion of the chain corresponds to 6 to 85 (GRDKYEPAAI…NALTPPPTTP (80 aa)). Lys-9 carries the post-translational modification N6-acetyllysine. At Tyr-10 the chain carries Phosphotyrosine. Ser-16 is subject to Phosphoserine; by PKC. At Lys-21 the chain carries N6-acetyllysine. Positions 26–37 (KERDMDELKKEV) are enriched in basic and acidic residues. Residues Ser-38 and Ser-45 each carry the phosphoserine modification. The interval 80–82 (PPP) is phosphoinositide-3 kinase binding. The chain crosses the membrane as a helical span at residues 86 to 106 (EWVKFCRQLFGGFSMLLWIGA). At 107–129 (ILCFLAYGIQAATEEEPQNDNLY) the chain is on the extracellular side. A helical transmembrane segment spans residues 130 to 150 (LGVVLSAVVIITGCFSYYQEA). At 151 to 286 (KSSKIMESFK…GGQTPIAAEI (136 aa)) the chain is on the cytoplasmic side. Residues 214-233 (SSLTGESEPQTRSPDFTNEN) form a disordered region. A Phosphoserine modification is found at Ser-226. A Phosphotyrosine modification is found at Tyr-258. The helical transmembrane segment at 287-306 (EHFIHIITGVAVFLGVTFFI) threads the bilayer. The Extracellular segment spans residues 307–318 (LSLILEYTWLEA). The helical transmembrane segment at 319-336 (VIFLIGIIVANVPEGLLA) threads the bilayer. Residues 337 to 770 (TVTVCLTLTA…EEGRLIFDNL (434 aa)) are Cytoplasmic-facing. Asp-374 serves as the catalytic 4-aspartylphosphate intermediate. Ser-450 and Ser-482 each carry phosphoserine. ATP is bound at residue Lys-485. Tyr-540 carries the phosphotyrosine modification. Residues 594-715 (RAAVPDAVGK…QGAIVAVTGD (122 aa)) are mediates interaction with SCN7A. At Lys-659 the chain carries N6-succinyllysine. A Phosphoserine modification is found at Ser-666. Mg(2+)-binding residues include Asp-715 and Asp-719. The helical transmembrane segment at 771–790 (KKSIAYTLTSNIPEITPFLI) threads the bilayer. The Extracellular portion of the chain corresponds to 791 to 800 (FIIANIPLPL). The chain crosses the membrane as a helical span at residues 801–821 (GTVTILCIDLGTDMVPAISLA). At 822–841 (YEQAESDIMKRQPRNPQTDK) the chain is on the cytoplasmic side. Residues 842 to 864 (LVNERLISMAYGQIGMIQALGGF) form a helical membrane-spanning segment. Residues 865 to 916 (FTYFVILAENGFLPIHLLGLRVDWDDRWVNDVEDSYGQQWTYEQRKIVEFTC) lie on the Extracellular side of the membrane. A helical transmembrane segment spans residues 917–936 (HTAFFVSIVVVQWADLVICK). Over 937–949 (TRRNSVFQQGMKN) the chain is Cytoplasmic. Ser-941 is modified (phosphoserine; by PKA). A helical transmembrane segment spans residues 950-968 (KILIFGLFEETALAAFLSY). Residues 969–983 (CPGMGVALRMYPLKP) are Extracellular-facing. The chain crosses the membrane as a helical span at residues 984 to 1004 (TWWFCAFPYSLLIFVYDEVRK). Over 1005-1021 (LIIRRRPGGWVEKETYY) the chain is Cytoplasmic.

It belongs to the cation transport ATPase (P-type) (TC 3.A.3) family. Type IIC subfamily. The sodium/potassium-transporting ATPase is composed of a catalytic alpha subunit, an auxiliary non-catalytic beta subunit and an additional regulatory subunit. Interacts with regulatory subunit FXYD1. Interacts with regulatory subunit FXYD3. Interacts with SIK1. Interacts with SLC35G1 and STIM1. Interacts with CLN3; this interaction regulates the sodium/potassium-transporting ATPase complex localization at the plasma membrane. Interacts with SCN7A; activates ATP1A1 P-type sodium:potassium-exchanging transporter activity which indirectly signals to nearby neurons to regulate sodium homeostasis. Post-translationally, phosphorylation on Tyr-10 modulates pumping activity. Phosphorylation of Ser-941 by PKA modulates the response of ATP1A1 to PKC. Dephosphorylation by protein phosphatase 2A (PP2A) following increases in intracellular sodium, leading to increase catalytic activity.

It is found in the cell membrane. It localises to the basolateral cell membrane. Its subcellular location is the sarcolemma. The protein localises to the cell projection. The protein resides in the axon. It is found in the melanosome. The enzyme catalyses K(+)(out) + Na(+)(in) + ATP + H2O = K(+)(in) + Na(+)(out) + ADP + phosphate + H(+). Its function is as follows. This is the catalytic component of the active enzyme, which catalyzes the hydrolysis of ATP coupled with the exchange of sodium and potassium ions across the plasma membrane. This action creates the electrochemical gradient of sodium and potassium ions, providing the energy for active transport of various nutrients. Could also be part of an osmosensory signaling pathway that senses body-fluid sodium levels and controls salt intake behavior as well as voluntary water intake to regulate sodium homeostasis. The polypeptide is Sodium/potassium-transporting ATPase subunit alpha-1 (ATP1A1) (Equus caballus (Horse)).